The following is a 113-amino-acid chain: T cell receptor alpha variable 13-2 (113 aa).

Positions 1–21 are cleaved as a signal peptide; it reads MAGIRALFMYLWLQLDWVSRG. Residues 22–113 enclose the Ig-like domain; it reads ESVGLHLPTL…DSAVYFCAEN (92 aa). Cys43 and Cys110 are disulfide-bonded. Asn87 carries an N-linked (GlcNAc...) asparagine glycan.

Alpha-beta TR is a heterodimer composed of an alpha and beta chain; disulfide-linked. The alpha-beta TR is associated with the transmembrane signaling CD3 coreceptor proteins to form the TR-CD3 (TcR or TCR). The assembly of alpha-beta TR heterodimers with CD3 occurs in the endoplasmic reticulum where a single alpha-beta TR heterodimer associates with one CD3D-CD3E heterodimer, one CD3G-CD3E heterodimer and one CD247 homodimer forming a stable octameric structure. CD3D-CD3E and CD3G-CD3E heterodimers preferentially associate with TR alpha and TR beta chains, respectively. The association of the CD247 homodimer is the last step of TcR assembly in the endoplasmic reticulum and is required for transport to the cell surface.

Its subcellular location is the cell membrane. Its function is as follows. V region of the variable domain of T cell receptor (TR) alpha chain that participates in the antigen recognition. Alpha-beta T cell receptors are antigen specific receptors which are essential to the immune response and are present on the cell surface of T lymphocytes. Recognize peptide-major histocompatibility (MH) (pMH) complexes that are displayed by antigen presenting cells (APC), a prerequisite for efficient T cell adaptive immunity against pathogens. Binding of alpha-beta TR to pMH complex initiates TR-CD3 clustering on the cell surface and intracellular activation of LCK that phosphorylates the ITAM motifs of CD3G, CD3D, CD3E and CD247 enabling the recruitment of ZAP70. In turn ZAP70 phosphorylates LAT, which recruits numerous signaling molecules to form the LAT signalosome. The LAT signalosome propagates signal branching to three major signaling pathways, the calcium, the mitogen-activated protein kinase (MAPK) kinase and the nuclear factor NF-kappa-B (NF-kB) pathways, leading to the mobilization of transcription factors that are critical for gene expression and essential for T cell growth and differentiation. The T cell repertoire is generated in the thymus, by V-(D)-J rearrangement. This repertoire is then shaped by intrathymic selection events to generate a peripheral T cell pool of self-MH restricted, non-autoaggressive T cells. Post-thymic interaction of alpha-beta TR with the pMH complexes shapes TR structural and functional avidity. The protein is T cell receptor alpha variable 13-2 of Homo sapiens (Human).